The primary structure comprises 120 residues: Large ribosomal subunit protein bL20c (120 aa).

This sequence belongs to the bacterial ribosomal protein bL20 family.

The protein localises to the plastid. Binds directly to 23S ribosomal RNA and is necessary for the in vitro assembly process of the 50S ribosomal subunit. It is not involved in the protein synthesizing functions of that subunit. The polypeptide is Large ribosomal subunit protein bL20c (rpl20) (Cuscuta gronovii (Common dodder)).